Reading from the N-terminus, the 406-residue chain is Type II secretion system protein F (406 aa).

Residues 1-171 (MAAFEYKALD…KMRSKLQQAM (171 aa)) are Cytoplasmic-facing. The Ca(2+) site is built by glutamate 97, glutamate 151, and aspartate 155. A helical membrane pass occupies residues 172–192 (IYPVVLVVFAVGIVAFLLAAV). The Periplasmic portion of the chain corresponds to 193 to 223 (VPKIVGQFVQMGQALPASTQFLLDASDFLQH). A helical membrane pass occupies residues 224 to 244 (WGISLLVGLLMLIYLVRWLLT). Over 245–368 (KPDIRLRWDR…QDNSFESTVN (124 aa)) the chain is Cytoplasmic. Residues 369-389 (IALGIFTPALIALMAGMVLFI) form a helical membrane-spanning segment. The Periplasmic portion of the chain corresponds to 390-406 (VMATLMPILEMNNLMSR).

It belongs to the GSP F family. In terms of assembly, type II secretion system is composed of four main components: the outer membrane complex, the inner membrane complex, the cytoplasmic secretion ATPase and the periplasm-spanning pseudopilus. Homodimer. Interacts with EpsE/GspE and EpsL/GspL components.

It localises to the cell inner membrane. Component of the type II secretion system inner membrane complex required for the energy-dependent secretion of extracellular factors such as proteases and toxins from the periplasm. This Vibrio cholerae serotype O1 (strain ATCC 39315 / El Tor Inaba N16961) protein is Type II secretion system protein F (epsF).